A 272-amino-acid polypeptide reads, in one-letter code: Phytolongin Phyl2.2 (272 aa).

Positions 12–116 (CIAKGTVVLA…LINPVSHCLQ (105 aa)) constitute a Longin domain. A helical; Anchor for type IV membrane protein transmembrane segment spans residues 243–263 (WVVLMFDFCICAVLFGIWLWI).

The protein belongs to the synaptobrevin family.

Its subcellular location is the membrane. Functionally, non-SNARE longin protein involved in membrane-trafficking machinery. This is Phytolongin Phyl2.2 from Arabidopsis thaliana (Mouse-ear cress).